A 249-amino-acid chain; its full sequence is Thrombin-like enzyme barnettobin (249 aa).

Residues 1-10 (APKELQVSYA) form the signal peptide. Positions 11-16 (HKSSEL) are excised as a propeptide. The region spanning 17 to 240 (VIGGDECDIN…YPPWIQSIIA (224 aa)) is the Peptidase S1 domain. 6 disulfide bridges follow: cysteine 23-cysteine 154, cysteine 41-cysteine 57, cysteine 89-cysteine 247, cysteine 133-cysteine 201, cysteine 165-cysteine 180, and cysteine 191-cysteine 216. Residues histidine 56 and aspartate 101 each act as charge relay system in the active site. N-linked (GlcNAc...) asparagine glycosylation is found at asparagine 145 and asparagine 161. The active-site Charge relay system is the serine 195. Asparagine 242 is a glycosylation site (N-linked (GlcNAc...) asparagine).

This sequence belongs to the peptidase S1 family. Snake venom subfamily. In terms of assembly, monomer. Post-translationally, glycoprotein, contains approx. 52% carbohydrate which could be removed by N-glycosidase. Glycosylation is important, since deglycosylated barnettobin loses its clotting and defibrinogenating effects. As to expression, expressed by the venom gland.

The protein resides in the secreted. With respect to regulation, both coagulant and amidolytic activities are inhibited by PMSF. Amidolytic activity is partially inhibited by DTT, chymostatin, SBTI and TLCK, but not by heparin and EDTA. Its function is as follows. Thrombin-like snake venom serine protease that releases only fibrinopeptide A from human Aalpha chain of fibrinogen (specific coagulant activity was 251.7 NIH thrombin units/mg). Also shows fibrino(geno)lytic activities in vitro and defibrinogenating effects in vivo. The chain is Thrombin-like enzyme barnettobin from Bothrops barnetti (Barnett's lancehead).